We begin with the raw amino-acid sequence, 1321 residues long: Lysine-specific demethylase 3A (1321 aa).

Ser264 and Ser325 each carry phosphoserine. Disordered stretches follow at residues 307–336 (ATPPSKDPRQQSTPQAANSPPNLGAKIPQG), 383–402 (LTEPKGSCTQPKTNTDQENR), and 438–472 (KHLEHAPSPSDVSNAPEVKAGVNSDSPNNCSGKKV). The segment covering 316-327 (QQSTPQAANSPP) has biased composition (polar residues). Ser445 carries the phosphoserine modification. The C6-type zinc-finger motif lies at 662 to 687 (CDVCDTTIFNLHWVCPRCGFGVCVDC). A Phosphoserine modification is found at Ser766. The LXXLL motif motif lies at 885 to 889 (LRNLL). Residue Lys895 is modified to N6-acetyllysine. The JmjC domain maps to 1058-1281 (MPSRFDDLMA…HCFWLTQEFR (224 aa)). 3 residues coordinate Fe cation: His1120, Asp1122, and His1249.

This sequence belongs to the JHDM2 histone demethylase family. Interacts with VRK1. It depends on Fe(2+) as a cofactor.

It is found in the cytoplasm. The protein resides in the nucleus. The enzyme catalyses N(6),N(6)-dimethyl-L-lysyl(9)-[histone H3] + 2 2-oxoglutarate + 2 O2 = L-lysyl(9)-[histone H3] + 2 formaldehyde + 2 succinate + 2 CO2. Functionally, histone demethylase that specifically demethylates 'Lys-9' of histone H3, thereby playing a central role in histone code. Preferentially demethylates mono- and dimethylated H3 'Lys-9' residue, with a preference for dimethylated residue, while it has weak or no activity on trimethylated H3 'Lys-9'. Demethylation of Lys residue generates formaldehyde and succinate. Involved in hormone-dependent transcriptional activation, by participating in recruitment to androgen-receptor target genes, resulting in H3 'Lys-9' demethylation and transcriptional activation. Involved in spermatogenesis by regulating expression of target genes such as PRM1 and TNP1 which are required for packaging and condensation of sperm chromatin. Involved in obesity resistance through regulation of metabolic genes such as PPARA and UCP1. The polypeptide is Lysine-specific demethylase 3A (KDM3A) (Homo sapiens (Human)).